Here is a 610-residue protein sequence, read N- to C-terminus: Phosphomethylpyrimidine synthase (610 aa).

Residues Asn216, Met245, Tyr274, His310, 330-332 (SRG), 371-374 (DGLR), and Glu410 contribute to the substrate site. Position 414 (His414) interacts with Zn(2+). Tyr437 is a binding site for substrate. His478 provides a ligand contact to Zn(2+). Residues Cys558, Cys561, and Cys566 each coordinate [4Fe-4S] cluster.

Belongs to the ThiC family. Homodimer. [4Fe-4S] cluster serves as cofactor.

The catalysed reaction is 5-amino-1-(5-phospho-beta-D-ribosyl)imidazole + S-adenosyl-L-methionine = 4-amino-2-methyl-5-(phosphooxymethyl)pyrimidine + CO + 5'-deoxyadenosine + formate + L-methionine + 3 H(+). It functions in the pathway cofactor biosynthesis; thiamine diphosphate biosynthesis. Functionally, catalyzes the synthesis of the hydroxymethylpyrimidine phosphate (HMP-P) moiety of thiamine from aminoimidazole ribotide (AIR) in a radical S-adenosyl-L-methionine (SAM)-dependent reaction. This is Phosphomethylpyrimidine synthase from Allorhizobium ampelinum (strain ATCC BAA-846 / DSM 112012 / S4) (Agrobacterium vitis (strain S4)).